Here is a 195-residue protein sequence, read N- to C-terminus: Peptidyl-tRNA hydrolase (195 aa).

Position 17 (tyrosine 17) interacts with tRNA. The active-site Proton acceptor is histidine 22. TRNA is bound by residues tyrosine 68, asparagine 70, and asparagine 116.

Belongs to the PTH family. As to quaternary structure, monomer.

Its subcellular location is the cytoplasm. The catalysed reaction is an N-acyl-L-alpha-aminoacyl-tRNA + H2O = an N-acyl-L-amino acid + a tRNA + H(+). In terms of biological role, hydrolyzes ribosome-free peptidyl-tRNAs (with 1 or more amino acids incorporated), which drop off the ribosome during protein synthesis, or as a result of ribosome stalling. Its function is as follows. Catalyzes the release of premature peptidyl moieties from peptidyl-tRNA molecules trapped in stalled 50S ribosomal subunits, and thus maintains levels of free tRNAs and 50S ribosomes. This chain is Peptidyl-tRNA hydrolase, found in Shewanella baltica (strain OS155 / ATCC BAA-1091).